The following is a 240-amino-acid chain: MGHKPLYRQIADRIREQIARGELKPGDALPTESALQTEFGVSRVTVRQALRQLVEQQILESIQGSGTYVKEERVNYDIFQLTSFDEKLSDRHVDTHSEVLIFEVIPADDFLQQQLQITPQDRVWHVKRVRYRKQKPMALEETWMPLALFPDLTWQVMENSKYHFIEEVKKMVIDRSEQEIIPLMPTEEMSRLLNISQTKPILEKVSRGYLVDGRVFEYSRNAFNTDDYKFTLIAQRKSSR.

Residues 4 to 72 (KPLYRQIADR…QGSGTYVKEE (69 aa)) enclose the HTH gntR-type domain. Residues 32–51 (ESALQTEFGVSRVTVRQALR) constitute a DNA-binding region (H-T-H motif).

In terms of biological role, represses mngA and mngB. Regulates its own expression. This Escherichia coli (strain K12) protein is Mannosyl-D-glycerate transport/metabolism system repressor MngR (mngR).